The primary structure comprises 417 residues: UDP-N-acetylglucosamine 1-carboxyvinyltransferase (417 aa).

Lys-22–Asn-23 is a phosphoenolpyruvate binding site. UDP-N-acetyl-alpha-D-glucosamine is bound at residue Arg-93. Cys-117 acts as the Proton donor in catalysis. A 2-(S-cysteinyl)pyruvic acid O-phosphothioketal modification is found at Cys-117. Residues Arg-122–Gln-126, Asp-305, and Ile-327 contribute to the UDP-N-acetyl-alpha-D-glucosamine site.

This sequence belongs to the EPSP synthase family. MurA subfamily.

It is found in the cytoplasm. It carries out the reaction phosphoenolpyruvate + UDP-N-acetyl-alpha-D-glucosamine = UDP-N-acetyl-3-O-(1-carboxyvinyl)-alpha-D-glucosamine + phosphate. It participates in cell wall biogenesis; peptidoglycan biosynthesis. Functionally, cell wall formation. Adds enolpyruvyl to UDP-N-acetylglucosamine. This is UDP-N-acetylglucosamine 1-carboxyvinyltransferase from Nitrosomonas eutropha (strain DSM 101675 / C91 / Nm57).